Here is a 364-residue protein sequence, read N- to C-terminus: Ribosomal RNA large subunit methyltransferase M (364 aa).

Residues Ser-198, 231 to 234 (APGG), Asp-250, Asp-270, and Asp-286 each bind S-adenosyl-L-methionine. The active-site Proton acceptor is Lys-315.

It belongs to the class I-like SAM-binding methyltransferase superfamily. RNA methyltransferase RlmE family. RlmM subfamily. In terms of assembly, monomer.

The protein resides in the cytoplasm. The enzyme catalyses cytidine(2498) in 23S rRNA + S-adenosyl-L-methionine = 2'-O-methylcytidine(2498) in 23S rRNA + S-adenosyl-L-homocysteine + H(+). In terms of biological role, catalyzes the 2'-O-methylation at nucleotide C2498 in 23S rRNA. The sequence is that of Ribosomal RNA large subunit methyltransferase M from Azoarcus sp. (strain BH72).